Consider the following 90-residue polypeptide: Large ribosomal subunit protein bL31 (90 aa).

The disordered stretch occupies residues lysine 71–glutamate 90. The span at asparagine 81–glutamate 90 shows a compositional bias: basic and acidic residues.

Belongs to the bacterial ribosomal protein bL31 family. Type A subfamily. In terms of assembly, part of the 50S ribosomal subunit.

Binds the 23S rRNA. The polypeptide is Large ribosomal subunit protein bL31 (rpmE) (Aster yellows witches'-broom phytoplasma (strain AYWB)).